The following is a 72-amino-acid chain: MIKEDNIEMHGIVLDTLPNTMFRVQLENGHKITAHISGKIRKNYIRILTGDKVTVELTPYDLSKGRIIFRSR.

Residues 1-72 (MIKEDNIEMH…SKGRIIFRSR (72 aa)) form the S1-like domain.

This sequence belongs to the IF-1 family. In terms of assembly, component of the 30S ribosomal translation pre-initiation complex which assembles on the 30S ribosome in the order IF-2 and IF-3, IF-1 and N-formylmethionyl-tRNA(fMet); mRNA recruitment can occur at any time during PIC assembly.

It localises to the cytoplasm. Its function is as follows. One of the essential components for the initiation of protein synthesis. Stabilizes the binding of IF-2 and IF-3 on the 30S subunit to which N-formylmethionyl-tRNA(fMet) subsequently binds. Helps modulate mRNA selection, yielding the 30S pre-initiation complex (PIC). Upon addition of the 50S ribosomal subunit IF-1, IF-2 and IF-3 are released leaving the mature 70S translation initiation complex. The protein is Translation initiation factor IF-1 of Blochmanniella floridana.